The primary structure comprises 156 residues: ATP synthase subunit b (156 aa).

A helical transmembrane segment spans residues 7-27 (LFAQMVVFLILAWFTMKFVWP).

The protein belongs to the ATPase B chain family. F-type ATPases have 2 components, F(1) - the catalytic core - and F(0) - the membrane proton channel. F(1) has five subunits: alpha(3), beta(3), gamma(1), delta(1), epsilon(1). F(0) has three main subunits: a(1), b(2) and c(10-14). The alpha and beta chains form an alternating ring which encloses part of the gamma chain. F(1) is attached to F(0) by a central stalk formed by the gamma and epsilon chains, while a peripheral stalk is formed by the delta and b chains.

The protein localises to the cell inner membrane. In terms of biological role, f(1)F(0) ATP synthase produces ATP from ADP in the presence of a proton or sodium gradient. F-type ATPases consist of two structural domains, F(1) containing the extramembraneous catalytic core and F(0) containing the membrane proton channel, linked together by a central stalk and a peripheral stalk. During catalysis, ATP synthesis in the catalytic domain of F(1) is coupled via a rotary mechanism of the central stalk subunits to proton translocation. Functionally, component of the F(0) channel, it forms part of the peripheral stalk, linking F(1) to F(0). This Paraburkholderia phytofirmans (strain DSM 17436 / LMG 22146 / PsJN) (Burkholderia phytofirmans) protein is ATP synthase subunit b.